Consider the following 589-residue polypeptide: MAPHVRILSESLANKIAAGEVVERPASVVKELIENALDAGATDIRLEISAGGRRLIRVSDNGHGMSREDALLALERHATSKIRSDQDLETILTLGFRGEALPSIASVSRLRLKSREAGSIEGTEITAEGGTVRSVTACGMAVGTDLTVEQLFFNTPARLKFLRSAETEAAHVGDLMVRMAISRPDVSFSYYHDGRELLRVVPGDLRQRLLKLAARDATLFPVDGETAAARISGYLAPPAAARSTTSAMFTYINGRFVRDKVIQHAIMQAFRPILEKGRYPLVALFIELPAGEVDVNVHPTKHEVRFRRQAQVHDTIQGVLEEVLRDSPWLQRREAPQRPEPARPYTTPPPSSHREGVQHALDRFMAATPVAPPRIYEQPEPYRPPEPPAASEPTSGYFSGLSVIGQFRAAYILCQAEDRLVIIDQHAAYERVRFEQLKAGFATGGIESQRLLLPDTLELSFSEADTVRRYLNILEPLGFELEEFGGQTWRINAVPRIVAEQDHCRLLRDLLAELAEQGSNAHFDQLRDELLARVACHSVVRGSHPLERRQMEELLRAMDRTDFSAHCPHGRPVSHEITLRELEKFFNRP.

2 disordered regions span residues Leu-330 to Glu-355 and Arg-374 to Thr-394. Basic and acidic residues predominate over residues Gln-331 to Pro-341. Residues Pro-381–Ala-390 show a composition bias toward pro residues.

Belongs to the DNA mismatch repair MutL/HexB family.

In terms of biological role, this protein is involved in the repair of mismatches in DNA. It is required for dam-dependent methyl-directed DNA mismatch repair. May act as a 'molecular matchmaker', a protein that promotes the formation of a stable complex between two or more DNA-binding proteins in an ATP-dependent manner without itself being part of a final effector complex. This is DNA mismatch repair protein MutL from Trichlorobacter lovleyi (strain ATCC BAA-1151 / DSM 17278 / SZ) (Geobacter lovleyi).